The sequence spans 256 residues: Floral homeotic protein APETALA 1-1 (256 aa).

Residues 1–61 (MGRGRVQLKR…GKLFEYSTDS (61 aa)) form the MADS-box domain. One can recognise a K-box domain in the interval 88 to 178 (NTNWSMEYNR…SKQIKEREKV (91 aa)).

As to quaternary structure, homodimer capable of binding to CArG-box sequences. Expressed in some of the meristems of arrest-stage broccoli heads.

It localises to the nucleus. Transcription factor that promotes early floral meristem identity in synergy with LEAFY. Displays a redundant function with CAULIFLOWER in the up-regulation of LEAFY. Required subsequently for the transition of an inflorescence meristem into a floral meristem, and for the normal development of sepals and petals in flowers. Regulates positively B class homeotic proteins. This is Floral homeotic protein APETALA 1-1 (1AP1) from Brassica oleracea var. italica (Broccoli).